We begin with the raw amino-acid sequence, 367 residues long: Ataxin-7-like protein 3 (367 aa).

Residues 84-105 (CVCPNCSRSIAASRFAPHLEKC) form an SGF11-type zinc finger. Over residues 116–125 (ANRRIASSNN) the composition is skewed to low complexity. Residues 116 to 184 (ANRRIASSNN…GELSGSVNPD (69 aa)) form a disordered region. A compositionally biased stretch (acidic residues) spans 132–141 (DQEDNDDIND). Residues 199-266 (LGPEELRSIL…TMLENEAYEP (68 aa)) enclose the SCA7 domain. The span at 280–299 (ASSDISPSDSASSKASTNNS) shows a compositional bias: low complexity. Residues 280-367 (ASSDISPSDS…PAPSIYDDLN (88 aa)) are disordered. The span at 318 to 329 (GERDKAQERDRI) shows a compositional bias: basic and acidic residues. Low complexity predominate over residues 330–346 (AGSGSSGSSSQNALGLS).

Belongs to the SGF11 family. As to quaternary structure, component of some SAGA transcription coactivator-HAT complexes. Within the SAGA complex, participates in a subcomplex of SAGA called the DUB module (deubiquitination module).

Its subcellular location is the nucleus. Its function is as follows. Component of the transcription regulatory histone acetylation (HAT) complex SAGA, a multiprotein complex that activates transcription by remodeling chromatin and mediating histone acetylation and deubiquitination. Within the SAGA complex, participates in a subcomplex that specifically deubiquitinates histone H2B. The SAGA complex is recruited to specific gene promoters by activators, where it is required for transcription. This chain is Ataxin-7-like protein 3 (atxn7l3), found in Danio rerio (Zebrafish).